The chain runs to 188 residues: dCTP deaminase (188 aa).

Residues 111-116, 135-137, Q156, Y170, and Q180 each bind dCTP; these read KSTYAR and TLE. The Proton donor/acceptor role is filled by E137.

The protein belongs to the dCTP deaminase family. As to quaternary structure, homotrimer.

It catalyses the reaction dCTP + H2O + H(+) = dUTP + NH4(+). Its pathway is pyrimidine metabolism; dUMP biosynthesis; dUMP from dCTP (dUTP route): step 1/2. Its function is as follows. Catalyzes the deamination of dCTP to dUTP. This Methylococcus capsulatus (strain ATCC 33009 / NCIMB 11132 / Bath) protein is dCTP deaminase.